The chain runs to 87 residues: Small ribosomal subunit protein bS20 (87 aa).

The segment at 1-26 is disordered; the sequence is MANIKSAKKRAVQSEKRRKHNASRRS.

The protein belongs to the bacterial ribosomal protein bS20 family.

In terms of biological role, binds directly to 16S ribosomal RNA. In Yersinia enterocolitica serotype O:8 / biotype 1B (strain NCTC 13174 / 8081), this protein is Small ribosomal subunit protein bS20.